We begin with the raw amino-acid sequence, 358 residues long: G-protein coupled receptor 87 (358 aa).

Over 1–47 (MGLNLTLTKLPGNELYSQASHTANSTSEGHGKNSTLHNKFDTIILPV) the chain is Extracellular. Residues Asn-4, Asn-24, and Asn-33 are each glycosylated (N-linked (GlcNAc...) asparagine). The chain crosses the membrane as a helical span at residues 48–68 (LYLVIFVASILLNGLAVWIFF). At 69–75 (HIRNKTS) the chain is on the cytoplasmic side. Residues 76–96 (FIFYLKNIVVADLIMTLTFPF) form a helical membrane-spanning segment. At 97-116 (RIVRDAGFGPWYFEFILCRY) the chain is on the extracellular side. Cys-114 and Cys-192 are joined by a disulfide. A helical transmembrane segment spans residues 117-137 (TSVLFYANMYTSIVFLGLISV). Residues 138 to 159 (DRYLKVVKPFGDSRMYSITFTK) are Cytoplasmic-facing. The chain crosses the membrane as a helical span at residues 160–180 (VLSVCVWVIMAILSLPNIILT). Residues 181–208 (NGQPTKENIHDCMKLKSPLGAKWHMAVT) are Extracellular-facing. Residues 209-229 (YVDSCLFVAVLVILIGCYIAI) traverse the membrane as a helical segment. Residues 230–256 (SRYIHKSSRQFISQSSRKRKHNQSIRV) lie on the Cytoplasmic side of the membrane. A helical membrane pass occupies residues 257-277 (VVAVFFTCFLPYHLCRIPFTF). Topologically, residues 278 to 297 (SNLDRLLDESAHKILYYCKE) are extracellular. A helical transmembrane segment spans residues 298-318 (MTLFLSACNVCLDPIIYFFMC). At 319–358 (KSFSRRLFKKSNIRTRSESIRSLQSVRRSEVRIYYDYTDV) the chain is on the cytoplasmic side.

The protein belongs to the G-protein coupled receptor 1 family. Expressed at high levels in testis and brain and to a lesser extent placenta, ovary, prostate, and skeletal muscle but not in heart, lung, kidney, liver or intestine.

It localises to the cell membrane. Receptor for lysophosphatidic acid (LPA). Necessary for p53/TP53-dependent survival in response to DNA damage. Promotes the Hippo-YAP signaling pathway and thereby modulates glycolysis and oxidative stress production by the regulation of hexokinase-2/HK2. This chain is G-protein coupled receptor 87 (Gpr87), found in Mus musculus (Mouse).